A 105-amino-acid polypeptide reads, in one-letter code: U-scoloptoxin(16)-Sm4a (105 aa).

Residues 1-22 form the signal peptide; that stretch reads MWALTVFVTILAAAIPITGVTG.

It belongs to the scoloptoxin-16 family. Post-translationally, contains 4 disulfide bonds. Expressed by the venom gland.

It is found in the secreted. This Scolopendra morsitans (Tanzanian blue ringleg centipede) protein is U-scoloptoxin(16)-Sm4a.